The primary structure comprises 184 residues: Succinate dehydrogenase cytochrome b560 subunit, mitochondrial (184 aa).

A helical transmembrane segment spans residues 65–94 (LTWMLSGFHRISGCVMAGTLLVGGLGFAVL). Topologically, residues 95–114 (PLDFTTFVEYIRGWNLPCAV) are mitochondrial intermembrane. The chain crosses the membrane as a helical span at residues 115–139 (TAVFKYIIAFPIIFHTLNGIRFLGF). His129 contributes to the heme binding site. Residues 140 to 147 (DLAKGVDN) lie on the Mitochondrial matrix side of the membrane. The helical transmembrane segment at 148 to 169 (IGQVYKSGWLVFGVSAVIALAI) threads the bilayer. Residues 170 to 172 (VIN) are Mitochondrial intermembrane-facing.

It belongs to the cytochrome b560 family. As to quaternary structure, component of complex II composed of four subunits: a flavoprotein (FP), iron-sulfur protein (IP), and a cytochrome b560 composed of two transmembrane proteins. Heme is required as a cofactor.

Its subcellular location is the mitochondrion inner membrane. It functions in the pathway carbohydrate metabolism; tricarboxylic acid cycle. Functionally, membrane-anchoring subunit of succinate dehydrogenase (SDH) that is involved in complex II of the mitochondrial electron transport chain and is responsible for transferring electrons from succinate to ubiquinone (coenzyme Q). Mediates resistance to enteropathogenic E.coli infection. The polypeptide is Succinate dehydrogenase cytochrome b560 subunit, mitochondrial (mev-1) (Caenorhabditis briggsae).